Consider the following 227-residue polypeptide: Probable proteasome subunit beta type-2 (227 aa).

The propeptide at 1–6 (MITKTG) is removed in mature form. Catalysis depends on T7, which acts as the Nucleophile.

The protein belongs to the peptidase T1B family. The 26S proteasome consists of a 20S proteasome core and two 19S regulatory subunits. The 20S proteasome core is composed of 28 subunits that are arranged in four stacked rings, resulting in a barrel-shaped structure. The two end rings are each formed by seven alpha subunits, and the two central rings are each formed by seven beta subunits. The catalytic chamber with the active sites is on the inside of the barrel.

It is found in the cytoplasm. Its subcellular location is the nucleus. The catalysed reaction is Cleavage of peptide bonds with very broad specificity.. In terms of biological role, the proteasome degrades poly-ubiquitinated proteins in the cytoplasm and in the nucleus. It is essential for the regulated turnover of proteins and for the removal of misfolded proteins. The proteasome is a multicatalytic proteinase complex that is characterized by its ability to cleave peptides with Arg, Phe, Tyr, Leu, and Glu adjacent to the leaving group at neutral or slightly basic pH. It has an ATP-dependent proteolytic activity. In Encephalitozoon cuniculi (strain GB-M1) (Microsporidian parasite), this protein is Probable proteasome subunit beta type-2 (PUP1).